A 103-amino-acid polypeptide reads, in one-letter code: Acyl-CoA-binding protein (103 aa).

In terms of domain architecture, ACB spans 18–103; sequence HQADFDEAAE…AKTMVEKYGI (86 aa). An acyl-CoA contacts are provided by residues K30, 45 to 49, K67, K71, and Y90; that span reads YGFYK.

This sequence belongs to the ACBP family. As to quaternary structure, monomer.

It is found in the endoplasmic reticulum. Its subcellular location is the golgi apparatus. Binds medium- and long-chain acyl-CoA esters with very high affinity and may function as an intracellular carrier of acyl-CoA esters. It is also able to displace diazepam from the benzodiazepine (BZD) recognition site located on the GABA type A receptor. It is therefore possible that this protein also acts as a neuropeptide to modulate the action of the GABA receptor. The protein is Acyl-CoA-binding protein (DBI) of Anas platyrhynchos (Mallard).